A 269-amino-acid chain; its full sequence is Transmembrane protein 41B (269 aa).

The next 6 helical transmembrane spans lie at threonine 30–tyrosine 50, phenylalanine 87–isoleucine 107, leucine 125–leucine 147, leucine 175–isoleucine 195, proline 203–isoleucine 223, and serine 240–phenylalanine 260. The interval glycine 118 to leucine 229 is VTT domain; required for its function in autophagy.

The protein belongs to the TMEM41 family.

The protein resides in the endoplasmic reticulum membrane. It localises to the endomembrane system. It carries out the reaction a 1,2-diacyl-sn-glycero-3-phospho-L-serine(in) = a 1,2-diacyl-sn-glycero-3-phospho-L-serine(out). The enzyme catalyses cholesterol(in) = cholesterol(out). It catalyses the reaction a 1,2-diacyl-sn-glycero-3-phosphocholine(in) = a 1,2-diacyl-sn-glycero-3-phosphocholine(out). The catalysed reaction is a 1,2-diacyl-sn-glycero-3-phosphoethanolamine(in) = a 1,2-diacyl-sn-glycero-3-phosphoethanolamine(out). Functionally, phospholipid scramblase involved in lipid homeostasis and membrane dynamics processes. Has phospholipid scramblase activity toward cholesterol and phosphatidylserine, as well as phosphatidylethanolamine and phosphatidylcholine. Required for autophagosome formation: participates in early stages of autophagosome biogenesis at the endoplasmic reticulum (ER) membrane by reequilibrating the leaflets of the ER as lipids are extracted by ATG2 (ATG2A or ATG2B) to mediate autophagosome assembly. In addition to autophagy, involved in other processes in which phospholipid scramblase activity is required. Required for normal motor neuron development. In Gallus gallus (Chicken), this protein is Transmembrane protein 41B.